We begin with the raw amino-acid sequence, 127 residues long: Small ribosomal subunit protein uS11 (127 aa).

Belongs to the universal ribosomal protein uS11 family. As to quaternary structure, part of the 30S ribosomal subunit. Interacts with proteins S7 and S18. Binds to IF-3.

Its function is as follows. Located on the platform of the 30S subunit, it bridges several disparate RNA helices of the 16S rRNA. Forms part of the Shine-Dalgarno cleft in the 70S ribosome. This chain is Small ribosomal subunit protein uS11, found in Rickettsia africae (strain ESF-5).